A 249-amino-acid chain; its full sequence is Domoic acid biosynthesis cluster protein B (249 aa).

In terms of biological role, unknown function: part of the gene cluster that mediates the biosynthesis of domoic acid (DA) and derivatives, natural products with neurochemical activity acting as ionotropic glutamate receptor (iGluR) agonists, thus being neurotoxins causing amnesic shellfish poisoning (ASP). The sequence is that of Domoic acid biosynthesis cluster protein B from Pseudo-nitzschia multiseries (Marine planktonic diatom).